Consider the following 283-residue polypeptide: MLIIETLPLLRQQIRRLRMEGKRVALVPTMGNLHDGHMKLVDEAKARADVVVVSIFVNPMQFDRPEDLARYPRTLQEDCEKLNKRKVDLVFAPSVKEIYPNGTETHTYVDVPGLSTMLEGASRPGHFRGVSTIVSKLFNLVQPDIACFGEKDFQQLALIRKMVADMGFDIEIVGVPIMRAKDGLALSSRNGYLTAEQRKIAPGLYKVLSSIADKLQAGERDLDEIIAIAGQELNEKGFRSDDIQIRDADTLLEISENSKRAVILVAAWLGDARLIDNKLVELA.

ATP is bound at residue 30–37 (MGNLHDGH). His-37 (proton donor) is an active-site residue. Residue Gln-61 participates in (R)-pantoate binding. Gln-61 serves as a coordination point for beta-alanine. 149-152 (GEKD) provides a ligand contact to ATP. Residue Gln-155 coordinates (R)-pantoate. 186–189 (LSSR) contacts ATP.

The protein belongs to the pantothenate synthetase family. Homodimer.

It localises to the cytoplasm. It carries out the reaction (R)-pantoate + beta-alanine + ATP = (R)-pantothenate + AMP + diphosphate + H(+). Its pathway is cofactor biosynthesis; (R)-pantothenate biosynthesis; (R)-pantothenate from (R)-pantoate and beta-alanine: step 1/1. Its function is as follows. Catalyzes the condensation of pantoate with beta-alanine in an ATP-dependent reaction via a pantoyl-adenylate intermediate. The sequence is that of Pantothenate synthetase from Escherichia coli O6:K15:H31 (strain 536 / UPEC).